The primary structure comprises 68 residues: Basic phospholipase A2 homolog BdipTx-I (68 aa).

A disulfide bridge links Cys-28 with Cys-44.

This sequence belongs to the phospholipase A2 family. Group II subfamily. K49 sub-subfamily. As to expression, expressed by the venom gland.

It is found in the secreted. Its function is as follows. Snake venom phospholipase A2 (PLA2) that lacks enzymatic activity. Is myotoxic, induces edema, and causes systemic effects (renal changes that lead to proteinuria) on mice. A model of myotoxic mechanism has been proposed: an apo Lys49-PLA2 is activated by the entrance of a hydrophobic molecule (e.g. fatty acid) at the hydrophobic channel of the protein leading to a reorientation of a monomer. This reorientation causes a transition between 'inactive' to 'active' states, causing alignment of C-terminal and membrane-docking sites (MDoS) side-by-side and putting the membrane-disruption sites (MDiS) in the same plane, exposed to solvent and in a symmetric position for both monomers. The MDoS region stabilizes the toxin on membrane by the interaction of charged residues with phospholipid head groups. Subsequently, the MDiS region destabilizes the membrane with penetration of hydrophobic residues. This insertion causes a disorganization of the membrane, allowing an uncontrolled influx of ions (i.e. calcium and sodium), and eventually triggering irreversible intracellular alterations and cell death. The chain is Basic phospholipase A2 homolog BdipTx-I from Bothrops diporus (Chaco lancehead).